The sequence spans 67 residues: Non-specific lipid-transfer protein 2P (67 aa).

Disulfide bonds link cysteine 2–cysteine 34, cysteine 10–cysteine 24, cysteine 25–cysteine 60, and cysteine 36–cysteine 67.

Its function is as follows. Transfer lipids across membranes. May play a role in plant defense or in the biosynthesis of cuticle layers. The polypeptide is Non-specific lipid-transfer protein 2P (Triticum aestivum (Wheat)).